The sequence spans 188 residues: Large ribosomal subunit protein eL18 (188 aa).

Residue Lys-119 forms a Glycyl lysine isopeptide (Lys-Gly) (interchain with G-Cter in SUMO2) linkage. Ser-130 carries the post-translational modification Phosphoserine. The interval 150–188 (RHFGKAPGTPHSHTKPYVRSKGRKFERARGRRASRGYKN) is disordered. The residue at position 158 (Thr-158) is a Phosphothreonine. 2 stretches are compositionally biased toward basic residues: residues 161–171 (SHTKPYVRSKG) and 178–188 (RGRRASRGYKN). Lys-164 is covalently cross-linked (Glycyl lysine isopeptide (Lys-Gly) (interchain with G-Cter in SUMO2)).

The protein belongs to the eukaryotic ribosomal protein eL18 family. In terms of assembly, component of the large ribosomal subunit.

The protein localises to the cytoplasm. It localises to the cytosol. It is found in the rough endoplasmic reticulum. Functionally, component of the large ribosomal subunit. The ribosome is a large ribonucleoprotein complex responsible for the synthesis of proteins in the cell. The sequence is that of Large ribosomal subunit protein eL18 (Rpl18) from Rattus norvegicus (Rat).